Consider the following 399-residue polypeptide: Small ribosomal subunit protein uS3m (399 aa).

It belongs to the universal ribosomal protein uS3 family.

Its subcellular location is the mitochondrion. Functionally, essential for mitochondrial protein synthesis and required for the maturation of small ribosomal subunits. This Penicillium urticae protein is Small ribosomal subunit protein uS3m.